The following is a 398-amino-acid chain: Argininosuccinate synthase (398 aa).

ATP contacts are provided by residues 9-17 and alanine 37; that span reads AYSGGVDTS. Position 88 (tyrosine 88) interacts with L-citrulline. ATP is bound at residue glycine 118. L-aspartate is bound by residues threonine 120, asparagine 124, and aspartate 125. Asparagine 124 is a binding site for L-citrulline. Arginine 128, serine 176, serine 185, glutamate 261, and tyrosine 273 together coordinate L-citrulline.

It belongs to the argininosuccinate synthase family. Type 1 subfamily. In terms of assembly, homotetramer.

The protein localises to the cytoplasm. The enzyme catalyses L-citrulline + L-aspartate + ATP = 2-(N(omega)-L-arginino)succinate + AMP + diphosphate + H(+). The protein operates within amino-acid biosynthesis; L-arginine biosynthesis; L-arginine from L-ornithine and carbamoyl phosphate: step 2/3. The protein is Argininosuccinate synthase of Gloeobacter violaceus (strain ATCC 29082 / PCC 7421).